Reading from the N-terminus, the 1374-residue chain is Probable ATP-dependent RNA helicase spindle-E (1374 aa).

Positions 46 to 212 (LARIRENPVI…FKTPKKVGYL (167 aa)) constitute a Helicase ATP-binding domain. Residue 59-66 (GPTGCGKT) coordinates ATP. A DEAH box motif is present at residues 158-161 (DEIH). The region spanning 265–447 (VCDRLIENMH…NVILKAKLLE (183 aa)) is the Helicase C-terminal domain. In terms of domain architecture, Tudor spans 866-931 (QFAVGQMVAA…RKLDGPLAYM (66 aa)).

It belongs to the DEAD box helicase family. DEAH subfamily.

It is found in the cytoplasm. It catalyses the reaction ATP + H2O = ADP + phosphate + H(+). Probable ATP-binding RNA helicase which plays a central role during gametogenesis by repressing transposable elements and preventing their mobilization, which is essential for the germline integrity. Acts via the piRNA metabolic process, which mediates the repression of transposable elements during meiosis by forming complexes composed of piRNAs and Piwi proteins and govern the methylation and subsequent repression of transposons. This is Probable ATP-dependent RNA helicase spindle-E (spn-E) from Aedes aegypti (Yellowfever mosquito).